The sequence spans 300 residues: Forkhead transcription factor fkh-9 (300 aa).

A DNA-binding region (fork-head) is located at residues 66-161 (RPSLSYKDLI…DKQTLRRRNR (96 aa)). The disordered stretch occupies residues 153–208 (KQTLRRRNRQQPRALAKKSDAGRTLSRDDRGSSGSGETSPSPSQPSISPPNENPMP). Basic and acidic residues predominate over residues 169-183 (KKSDAGRTLSRDDRG). Residues 187-198 (SGETSPSPSQPS) are compositionally biased toward low complexity.

Expressed in mechanosensory neurons.

The protein localises to the nucleus. In terms of biological role, transcription factor. Binds to the regulatory elements of genes that contain the sequence motif 5'-TTGTTTCT-3'. Involved in regulating intestinal transcription of vitellogenin vit-2, acting in concert with transcription factors elt-2, mab-3 and daf-16, and also the TGF-beta/Sma/Mab pathway. Functions downstream of the insulin/IGF-1-like signaling (IIS) mediated pathway, in regeneration of axons after injury and in short-term memory, perhaps acting in neurons, and in modulation of longevity, perhaps acting non-neuronally. Plays a role in the modulation of endoplasmic reticulum (ER) homeostasis during chemical and pathogen stress, including exposure to the Gram-negative bacterium P.aeruginosa. This is Forkhead transcription factor fkh-9 from Caenorhabditis elegans.